The sequence spans 594 residues: Probable ABC transporter-binding protein DR_1571 (594 aa).

The signal sequence occupies residues 1–18; the sequence is MKKVMMLALALGASTSLA.

This sequence belongs to the bacterial solute-binding protein 5 family.

Functionally, probably part of a binding-protein-dependent transport system. The chain is Probable ABC transporter-binding protein DR_1571 from Deinococcus radiodurans (strain ATCC 13939 / DSM 20539 / JCM 16871 / CCUG 27074 / LMG 4051 / NBRC 15346 / NCIMB 9279 / VKM B-1422 / R1).